We begin with the raw amino-acid sequence, 161 residues long: Allophycocyanin alpha chain (161 aa).

At N71 the chain carries N4-methylasparagine. Residue C81 coordinates (2R,3E)-phycocyanobilin.

Belongs to the phycobiliprotein family. In terms of assembly, heterodimer of an alpha and a beta chain. Contains one covalently linked phycocyanobilin chromophore.

It localises to the plastid. Its subcellular location is the chloroplast thylakoid membrane. Light-harvesting photosynthetic bile pigment-protein from the phycobiliprotein complex. Allophycocyanin has a maximum absorption at approximately 650 nanometers. The chain is Allophycocyanin alpha chain (apcA) from Cyanidium caldarium (Red alga).